The sequence spans 86 residues: Small ribosomal subunit protein bS16 (86 aa).

It belongs to the bacterial ribosomal protein bS16 family.

The protein is Small ribosomal subunit protein bS16 of Nostoc punctiforme (strain ATCC 29133 / PCC 73102).